Here is a 221-residue protein sequence, read N- to C-terminus: Oxaloacetate tautomerase FAHD1, mitochondrial (221 aa).

The transit peptide at 1–24 directs the protein to the mitochondrion; that stretch reads MAASRPLSRFWEWGKNIVCVGRNY. Oxalate is bound at residue R22. S37 is subject to Phosphoserine. Mg(2+)-binding residues include E68, E70, and D99. Position 110 is an N6-acetyllysine (K110). K112 carries the post-translational modification N6-succinyllysine. Residues K120 and T189 each coordinate oxalate.

The protein belongs to the FAH family. As to quaternary structure, homodimer. The cofactor is Mg(2+). Mn(2+) is required as a cofactor. As to expression, ubiquitous (at protein level).

It is found in the mitochondrion. The protein resides in the cytoplasm. Its subcellular location is the cytosol. The enzyme catalyses oxaloacetate = enol-oxaloacetate. The catalysed reaction is oxaloacetate + H(+) = pyruvate + CO2. It catalyses the reaction a 3-acylpyruvate + H2O = a carboxylate + pyruvate + H(+). It carries out the reaction acetylpyruvate + H2O = acetate + pyruvate + H(+). The enzyme catalyses 3-fumarylpyruvate + H2O = fumarate + pyruvate + H(+). Its activity is regulated as follows. Oxaloacetate decarboxylation is competitively inhibited by oxalate. Functionally, tautomerase that converts enol-oxaloacetate, a strong inhibitor of succinate dehydrogenase, to the physiological keto form of oxaloacetate. It is thereby required to maximize aerobic respiration efficiency by preventing succinate dehydrogenase inhibition. Also acts as a weak oxaloacetate decarboxylase (ODx), catalyzing the decarboxylation of oxaloacetate (OAA) to pyruvate and CO(2), and as such is likely a regulatory enzyme in the TCA cycle. Also displays acylpyruvase activity, being able to hydrolyze acetylpyruvate and fumarylpyruvate in vitro. Exhibits only a weak hydrolase activity on methylacetopyruvate and acetylacetone, and no activity toward acetoacetyl-CoA. The protein is Oxaloacetate tautomerase FAHD1, mitochondrial of Homo sapiens (Human).